The chain runs to 323 residues: Prenyl transferase (323 aa).

Lys46, Arg49, and His81 together coordinate isopentenyl diphosphate. Residues Asp88 and Asp92 each coordinate Mg(2+). Position 97 (Arg97) interacts with an all-trans-polyprenyl diphosphate. Arg98 is an isopentenyl diphosphate binding site. An all-trans-polyprenyl diphosphate contacts are provided by Lys174, Thr175, and Gln212.

Belongs to the FPP/GGPP synthase family. Mg(2+) is required as a cofactor.

It is found in the plastid. The protein localises to the cyanelle. Functionally, possible role in synthesis of the nonaprenyl side chain of plastoquinone or in synthesis of other prenyl chains such as undekaprenyl pyrophosphate. The polypeptide is Prenyl transferase (preA) (Cyanophora paradoxa).